We begin with the raw amino-acid sequence, 561 residues long: Formate--tetrahydrofolate ligase (561 aa).

70 to 77 (TPAGEGKT) provides a ligand contact to ATP.

Belongs to the formate--tetrahydrofolate ligase family.

It catalyses the reaction (6S)-5,6,7,8-tetrahydrofolate + formate + ATP = (6R)-10-formyltetrahydrofolate + ADP + phosphate. It participates in one-carbon metabolism; tetrahydrofolate interconversion. In Pelagibacter ubique (strain HTCC1062), this protein is Formate--tetrahydrofolate ligase.